A 56-amino-acid chain; its full sequence is Ovomucoid (56 aa).

Positions 6-56 (VDCSDHPKPACLQEQKPICGSDNKTYDNKCSFCNAVVDSNGTLTLSHFGKC) constitute a Kazal-like domain. Disulfide bonds link Cys8/Cys38, Cys16/Cys35, and Cys24/Cys56. Residue Asn45 is glycosylated (N-linked (GlcNAc...) asparagine).

The protein localises to the secreted. This is Ovomucoid from Ortalis vetula (Plain chachalaca).